The chain runs to 268 residues: Short chain dehydrogenase/reductase dpchG (268 aa).

Residues Val18, Asp70, Asn97, Lys131, Tyr165, and Lys169 each coordinate NADP(+). Tyr165 (proton acceptor) is an active-site residue. Lys169 acts as the Lowers pKa of active site Tyr in catalysis.

It belongs to the short-chain dehydrogenases/reductases (SDR) family.

It functions in the pathway secondary metabolite biosynthesis; terpenoid biosynthesis. Functionally, short chain dehydrogenase/reductase; part of the gene cluster that mediates the biosynthesis of the diterpenoid pyrones higginsianins A and B. The first step of the pathway is the synthesis of the alpha-pyrone moiety by the polyketide synthase dpchA via condensation of one acetyl-CoA starter unit with 3 malonyl-CoA units and 2 methylations. The alpha-pyrone is then combined with geranylgeranyl pyrophosphate (GGPP) formed by the GGPP synthase dpchD through the action of the prenyltransferase dpchC to yield a linear alpha-pyrone diterpenoid. Subsequent steps in the diterpenoid pyrone biosynthetic pathway involve the decalin core formation, which is initiated by the epoxidation of the C10-C11 olefin by the FAD-dependent oxidoreductase dpchE, and is followed by a cyclization cascade catalyzed by the terpene cyclase dpchB. The short chain dehydrogenase/reductase dpchG then oxidizes the 8S hydroxy group to a ketone and the short chain dehydrogenase/reductase dpchH reduces the ketone to the 8R hydroxy group to yield higginsianin B. Finally, the FAD-dependent oxidoreductase dpchF converts higginsianin B into higginsianin A. The polypeptide is Short chain dehydrogenase/reductase dpchG (Colletotrichum higginsianum (strain IMI 349063) (Crucifer anthracnose fungus)).